We begin with the raw amino-acid sequence, 525 residues long: Cytochrome P450 monooxygenase ltmJ (525 aa).

The chain crosses the membrane as a helical span at residues 21–43; that stretch reads LTWWQTIVSFIIFCIMCSWLPGN. Asn136 carries N-linked (GlcNAc...) asparagine glycosylation. Residue Cys465 coordinates heme.

It belongs to the cytochrome P450 family. Requires heme as cofactor.

Its subcellular location is the membrane. Its pathway is secondary metabolite biosynthesis. Functionally, cytochrome P450 monooxygenase; part of the gene clusters that mediates the biosynthesis of lolitrems, indole-diterpene mycotoxins that are potent tremorgens in mammals, and are synthesized by clavicipitaceous fungal endophytes in association with their grass hosts. The geranylgeranyl diphosphate (GGPP) synthase ltmG is proposed to catalyze the first step in lolitrem biosynthesis. LtmG catalyzes a series of iterative condensations of isopentenyl diphosphate (IPP) with dimethylallyl diphosphate (DMAPP), geranyl diphosphate (GPP), and farnesyl diphosphate (FPP), to form GGPP. GGPP then condenses with indole-3-glycerol phosphate to form 3-geranylgeranylindole, an acyclic intermediate, to be incorporated into paxilline. Either ltmG or ltmC could be responsible for this step, as both are putative prenyl transferases. The FAD-dependent monooxygenase ltmM then catalyzes the epoxidation of the two terminal alkenes of the geranylgeranyl moiety, which is subsequently cyclized by ltmB, to paspaline. The cytochrome P450 monooxygenases ltmQ and ltmP can sequentially oxidize paspaline to terpendole E and terpendole F. Alternatively, ltmP converts paspaline to an intermediate which is oxidized by ltmQ to terpendole F. LtmF, ltmK, ltmE and ltmJ appear to be unique to the epichloe endophytes. The prenyltransferase ltmF is involved in the 27-hydroxyl-O-prenylation. The cytochrome P450 monooxygenase ltmK is required for the oxidative acetal ring formation. The multi-functional prenyltransferase ltmE is required for C20- and C21-prenylations of the indole ring of paspalanes and acts together with the cytochrome P450 monooxygenase ltmJ to yield lolitremanes by multiple oxidations and ring closures. The stereoisomer pairs of lolitriol and lolitrem N or lolitrem B and lolitrem F may be attributed to variations in the way in which ring closure can occur under the action of ltmJ. While the major product of this pathway is lolitrem B, the prenyl transferases and cytochrome P450 monooxygenases identified in this pathway have a remarkable versatility in their regio- and stereo-specificities to generate a diverse range of metabolites that are products of a metabolic grid rather than a linear pathway. In Epichloe festucae var. lolii (Neotyphodium lolii), this protein is Cytochrome P450 monooxygenase ltmJ (ltmJ).